The chain runs to 1063 residues: Retinoblastoma-like protein 1 (1063 aa).

3 positions are modified to phosphothreonine: Thr332, Thr369, and Thr385. The tract at residues 383–584 (VTTPVASATQ…WEALHASANR (202 aa)) is domain A. Residues 383–944 (VTTPVASATQ…GRVKSFALKY (562 aa)) are pocket; binds T and E1A. Positions 585–779 (VPSCEEVIFP…AQDAHLTGVS (195 aa)) are spacer. Residues Ser640, Ser650, Ser748, and Ser761 each carry the phosphoserine modification. Residues 780-944 (KPKRTGSLAL…GRVKSFALKY (165 aa)) are domain B. Phosphoserine is present on residues Ser959, Ser970, and Ser983. Thr992 is subject to Phosphothreonine. Phosphoserine occurs at positions 1004 and 1036.

The protein belongs to the retinoblastoma protein (RB) family. As to quaternary structure, component of the DREAM complex (also named LINC complex) at least composed of E2F4, E2F5, LIN9, LIN37, LIN52, LIN54, MYBL1, MYBL2, RBL1, RBL2, RBBP4, TFDP1 and TFDP2. The complex exists in quiescent cells where it represses cell cycle-dependent genes. It dissociates in S phase when LIN9, LIN37, LIN52 and LIN54 form a subcomplex that binds to MYBL2. Interacts with AATF. Interacts with KDM5A. Interacts with KMT5B and KMT5C. Interacts with USP4. Interacts with RBBP9. Cell-cycle arrest properties are inactivated by phosphorylation on Thr-332, Ser-640, Ser-959 and Ser-970 by CDK4. In terms of tissue distribution, highly expressed in fetal heart and liver. Expressed at low levels in all other fetal tissues except skeletal muscle. High levels in neonatal spleen and thymus with low levels in other tissues. In adult, highly expressed in testis. Barely detectable in other tissues.

Its subcellular location is the nucleus. In terms of biological role, key regulator of entry into cell division. Directly involved in heterochromatin formation by maintaining overall chromatin structure and, in particular, that of constitutive heterochromatin by stabilizing histone methylation. Recruits and targets histone methyltransferases KMT5B and KMT5C, leading to epigenetic transcriptional repression. Controls histone H4 'Lys-20' trimethylation. Probably acts as a transcription repressor by recruiting chromatin-modifying enzymes to promoters. Potent inhibitor of E2F-mediated trans-activation. May act as a tumor suppressor. The sequence is that of Retinoblastoma-like protein 1 (Rbl1) from Mus musculus (Mouse).